The sequence spans 666 residues: Collagen alpha-1(XXV) chain (666 aa).

Positions 1-24 (MLVKKLAGKGGGRESGSEDPRPLG) are disordered. Residues 1–33 (MLVKKLAGKGGGRESGSEDPRPLGQRCAGTMPS) lie on the Cytoplasmic side of the membrane. The segment covering 11–21 (GGRESGSEDPR) has biased composition (basic and acidic residues). Residues 34 to 54 (CTALATLLSVVAVAFCFYLGV) traverse the membrane as a helical; Signal-anchor for type II membrane protein segment. Topologically, residues 55–666 (KTNDLQARIA…GLPMPGCWQK (612 aa)) are extracellular. Residues 116-168 (LECNCPAGPPGKRGKRGRRGESGPPGQPGPQGPPGPKGDKGEQGDQGPRMVFP) form a disordered region. The Collagen-like 1 domain occupies 121–164 (PAGPPGKRGKRGRRGESGPPGQPGPQGPPGPKGDKGEQGDQGPR). Pro residues predominate over residues 140-151 (PGQPGPQGPPGP). The segment at 181-188 (LIKRRLIK) is interaction with amyloid-beta peptide. Disordered stretches follow at residues 189–428 (GDQG…ATEI) and 445–666 (LTVT…CWQK). 7 consecutive Collagen-like domains span residues 192-247 (GQAG…QKGS), 249-308 (GAPG…PGSS), 311-370 (GIKG…AGPP), 373-425 (GERG…DPGA), 455-514 (GPQG…KGEK), 529-588 (GPPG…KGAM), and 589-648 (GEPG…DGLD). The span at 196–208 (PPGPPGPPGPRGP) shows a compositional bias: pro residues. A compositionally biased stretch (low complexity) spans 230-245 (PGEQGLMGPLGPPGQK). The segment covering 280 to 290 (EPGKEGEKGDA) has biased composition (basic and acidic residues). The span at 336–358 (LPGIKGEPGFIGPQGEPGLPGLP) shows a compositional bias: low complexity. Composition is skewed to basic and acidic residues over residues 361–377 (KGDR…ERGD) and 398–407 (SKGDRGDKGD). A compositionally biased stretch (low complexity) spans 457 to 466 (QGLQGPKGEQ). Residues 494 to 503 (GEKGGLGLPG) show a composition bias toward gly residues. Residues 528-543 (IGPPGPPGPHGPPGPM) show a composition bias toward pro residues. The segment covering 615–638 (RGEKGDLGEKGEKGFRGVKGEKGE) has biased composition (basic and acidic residues).

In terms of assembly, forms homodimers and homotrimers. Binds to the fibrillized forms of amyloid-beta protein 40 (beta-APP40) and amyloid-betad protein 42 (beta-APP42). Found associated with beta-APP42 more frequently than with beta-APP40. In terms of processing, undergoes proteolytic cleavage by furin protease to yield the soluble collagen-like Alzheimer amyloid plaque component. Post-translationally, glycosylated. Hydroxylated on proline and lysine residues. Expressed predominantly in neurons with low levels also detected in heart, testis and eye.

Its subcellular location is the membrane. Its function is as follows. Inhibits fibrillization of amyloid-beta peptide during the elongation phase. Has also been shown to assemble amyloid fibrils into protease-resistant aggregates. Binds heparin. This chain is Collagen alpha-1(XXV) chain, found in Mus musculus (Mouse).